We begin with the raw amino-acid sequence, 160 residues long: Cytochrome b6-f complex subunit 4 (160 aa).

3 consecutive transmembrane segments (helical) span residues 36–56 (LLYI…GLSV), 95–115 (LLGV…PFIE), and 127–147 (PVAM…GIGA).

The protein belongs to the cytochrome b family. PetD subfamily. In terms of assembly, the 4 large subunits of the cytochrome b6-f complex are cytochrome b6, subunit IV (17 kDa polypeptide, petD), cytochrome f and the Rieske protein, while the 4 small subunits are petG, petL, petM and petN. The complex functions as a dimer.

It is found in the plastid. Its subcellular location is the chloroplast thylakoid membrane. Its function is as follows. Component of the cytochrome b6-f complex, which mediates electron transfer between photosystem II (PSII) and photosystem I (PSI), cyclic electron flow around PSI, and state transitions. In Guillardia theta (Cryptophyte), this protein is Cytochrome b6-f complex subunit 4.